Consider the following 231-residue polypeptide: NADH-ubiquinone oxidoreductase chain 4 (231 aa).

Transmembrane regions (helical) follow at residues 1 to 21 (PIAG…YGII), 34 to 54 (MFIP…LTCL), 63 to 85 (IAYS…TPWG), 89 to 111 (AMAL…NTTY), 128 to 148 (ILPM…AMPP), and 169 to 189 (TIIM…HMFL).

It belongs to the complex I subunit 4 family.

It localises to the mitochondrion membrane. It catalyses the reaction a ubiquinone + NADH + 5 H(+)(in) = a ubiquinol + NAD(+) + 4 H(+)(out). Functionally, core subunit of the mitochondrial membrane respiratory chain NADH dehydrogenase (Complex I) that is believed to belong to the minimal assembly required for catalysis. Complex I functions in the transfer of electrons from NADH to the respiratory chain. The immediate electron acceptor for the enzyme is believed to be ubiquinone. This Lachesis muta muta (Bushmaster) protein is NADH-ubiquinone oxidoreductase chain 4 (MT-ND4).